The following is a 1480-amino-acid chain: Cystic fibrosis transmembrane conductance regulator (1480 aa).

The Cytoplasmic segment spans residues 1-77; it reads MQRSPLEKAS…KLINALRRCF (77 aa). The chain crosses the membrane as a helical span at residues 78-98; the sequence is FWRFMFYGIFLYLGEVTKAVQ. Positions 81–365 constitute an ABC transmembrane type-1 1 domain; the sequence is FMFYGIFLYL…WAVQTWYDSL (285 aa). Residues 99–122 lie on the Extracellular side of the membrane; that stretch reads PLLLGRIIASYDPDNKEERSIAIY. The chain crosses the membrane as a helical span at residues 123-146; it reads LGIGLCLLFIVRTLLLHPAIFGLH. Residues 147–195 are Cytoplasmic-facing; the sequence is HIGMQMRIAMFSLIYKKTLKLSSRVLDKISIGQLVSLLSNNLNKFDEGL. The chain crosses the membrane as a helical span at residues 196 to 216; it reads ALAHFVWIAPLQVALLMGLIW. At 217 to 222 the chain is on the extracellular side; it reads ELLQAS. A helical transmembrane segment spans residues 223-243; the sequence is AFCGLGFLIVLALFQAGLGRM. Over 244–298 the chain is Cytoplasmic; it reads MMKYRDQRAGKINERLVITSEMIENIQSVKAYCWEEAMEKMIENLRQTELKLTRK. Residues 299-319 form a helical membrane-spanning segment; sequence AAYVRYFNSSAFFFSGFFVVF. The Extracellular segment spans residues 320-339; the sequence is LSVLPYALIKGIVLRKIFTT. A helical membrane pass occupies residues 340–358; the sequence is ISFCIVLRMAVTRQFPWAV. Residues 359-858 are Cytoplasmic-facing; the sequence is QTWYDSLGAI…YLRYITVHKS (500 aa). ATP-binding positions include W401, S434, 458–465, and Q493; that span reads GSTGAGKT. The ABC transporter 1 domain maps to 423–646; that stretch reads NGDDSLFFSN…RPDFSSKLMG (224 aa). A lipid anchor (S-palmitoyl cysteine) is attached at C524. Phosphoserine is present on residues S549 and S660. A disordered R region region spans residues 654 to 831; the sequence is SAERRNSILT…EEINEEDLKE (178 aa). A Phosphoserine; by PKA modification is found at S670. Residue K688 forms a Glycyl lysine isopeptide (Lys-Gly) (interchain with G-Cter in ubiquitin) linkage. S700 and S712 each carry phosphoserine. At T717 the chain carries Phosphothreonine. Phosphoserine is present on residues S737, S753, S768, S790, S795, and S813. Residues 859–879 traverse the membrane as a helical segment; the sequence is LIFVLIWCLVIFLAEVAASLV. Residues 859 to 1155 form the ABC transmembrane type-1 2 domain; sequence LIFVLIWCLV…AVNSSIDVDS (297 aa). The Extracellular segment spans residues 880-918; it reads VLWLLGNTPLQDKGNSTHSRNNSYAVIITSTSSYYVFYI. N-linked (GlcNAc...) asparagine glycans are attached at residues N894 and N900. The discontinuously helical transmembrane segment at 919–939 threads the bilayer; sequence YVGVADTLLAMGFFRGLPLVH. The Cytoplasmic segment spans residues 940–990; that stretch reads TLITVSKILHNKMLHSVLQAPMSTLNTLKAGGILNRFSKDIAILDDLLPLT. The chain crosses the membrane as a helical span at residues 991 to 1011; that stretch reads IFDFIQLLLIVIGAIAVVAVL. The Extracellular segment spans residues 1012-1013; sequence QP. A helical membrane pass occupies residues 1014–1034; the sequence is YIFVATVPVIVAFIMLRAYFL. Over 1035-1095 the chain is Cytoplasmic; the sequence is QTSQQLKQLE…TANWFLYLST (61 aa). A helical membrane pass occupies residues 1096–1116; it reads LRWFQMRIEMIFVIFFIAVTF. Residues 1117–1130 are Extracellular-facing; sequence ISILTTGEGEGRVG. The helical transmembrane segment at 1131–1151 threads the bilayer; it reads IILTLAMNIMSTLQWAVNSSI. The Cytoplasmic portion of the chain corresponds to 1152 to 1480; sequence DVDSLMRSVS…TEEEVQDTRL (329 aa). An ABC transporter 2 domain is found at 1210 to 1443; it reads MTVKDLTAKY…RSLFQQAISP (234 aa). Residues Y1219 and 1244–1251 each bind ATP; that span reads GRTGSGKS. Residues 1386-1480 are interaction with GORASP2; that stretch reads RTLKQAFADC…TEEEVQDTRL (95 aa). C1395 carries the S-palmitoyl cysteine lipid modification. Phosphoserine is present on residues S1444 and S1456. The disordered stretch occupies residues 1452-1480; sequence HRNSSKCKSKPQIAALKEETEEEVQDTRL. Acidic residues predominate over residues 1470-1480; that stretch reads ETEEEVQDTRL. The PDZ-binding signature appears at 1478 to 1480; sequence TRL.

Belongs to the ABC transporter superfamily. ABCC family. CFTR transporter (TC 3.A.1.202) subfamily. As to quaternary structure, monomer; does not require oligomerization for channel activity. May form oligomers in the membrane. Interacts with SLC26A3, SLC26A6 and NHERF1. Interacts with SHANK2. Interacts with MYO6. Interacts (via C-terminus) with GOPC (via PDZ domain); this promotes CFTR internalization and thereby decreases channel activity. Interacts with SLC4A7 through NHERF1. Found in a complex with MYO5B and RAB11A. Interacts with ANO1. Interacts with SLC26A8. Interacts with AHCYL1; the interaction increases CFTR activity. Interacts with CSE1L. The core-glycosylated form interacts with GORASP2 (via PDZ GRASP-type 1 domain) in respone to ER stress. Interacts with MARCHF2; the interaction leads to CFTR ubiqtuitination and degradation. Interacts with ADGRG2. Post-translationally, N-glycosylated. In terms of processing, phosphorylated; cAMP treatment promotes phosphorylation and activates the channel. Dephosphorylation decreases the ATPase activity (in vitro). Phosphorylation at PKA sites activates the channel. Phosphorylation at PKC sites enhances the response to phosphorylation by PKA. Phosphorylated by AMPK; this inhibits channel activity. Ubiquitinated, leading to its degradation in the lysosome. Deubiquitination by USP10 in early endosomes enhances its endocytic recycling to the cell membrane. Ubiquitinated by RNF185 during ER stress. Ubiquitinated by MARCHF2.

It is found in the apical cell membrane. Its subcellular location is the early endosome membrane. The protein resides in the cell membrane. It localises to the recycling endosome membrane. The protein localises to the endoplasmic reticulum membrane. It is found in the nucleus. It catalyses the reaction ATP + H2O + closed Cl(-) channel = ADP + phosphate + open Cl(-) channel.. The catalysed reaction is chloride(in) = chloride(out). It carries out the reaction hydrogencarbonate(in) = hydrogencarbonate(out). The enzyme catalyses ATP + H2O = ADP + phosphate + H(+). Functionally, epithelial ion channel that plays an important role in the regulation of epithelial ion and water transport and fluid homeostasis. Mediates the transport of chloride ions across the cell membrane. Possesses an intrinsic ATPase activity and utilizes ATP to gate its channel; the passive flow of anions through the channel is gated by cycles of ATP binding and hydrolysis by the ATP-binding domains. The ion channel is also permeable to HCO(3)(-); selectivity depends on the extracellular chloride concentration. Exerts its function also by modulating the activity of other ion channels and transporters. Contributes to the regulation of the pH and the ion content of the epithelial fluid layer. Modulates the activity of the epithelial sodium channel (ENaC) complex, in part by regulating the cell surface expression of the ENaC complex. May regulate bicarbonate secretion and salvage in epithelial cells by regulating the transporter SLC4A7. Can inhibit the chloride channel activity of ANO1. Plays a role in the chloride and bicarbonate homeostasis during sperm epididymal maturation and capacitation. The sequence is that of Cystic fibrosis transmembrane conductance regulator from Pongo abelii (Sumatran orangutan).